Consider the following 157-residue polypeptide: Globin (157 aa).

Gly1 carries the post-translational modification N-acetylglycine. The Globin domain occupies 8–155 (SLSADQKAAI…MANIIDAEQK (148 aa)). Residues His70 and His102 each coordinate heme b.

This sequence belongs to the globin family. In terms of assembly, monomer.

The sequence is that of Globin from Nerita albicilla (Ox-palate nerite).